The primary structure comprises 262 residues: Short-chain reductase protein NovJ (262 aa).

NADP(+) is bound by residues 23 to 26 (GAGR) and 73 to 74 (DV). Ser-152 provides a ligand contact to substrate. Catalysis depends on Tyr-164, which acts as the Proton acceptor. 164-168 (YATAK) lines the NADP(+) pocket.

The protein belongs to the short-chain dehydrogenases/reductases (SDR) family. In terms of assembly, heterotetramer; the NovJ(2)K(2) heterotetramer is composed of subunits of 2 NovJ and 2 subunits of NovK.

The protein operates within antibiotic biosynthesis; novobiocin biosynthesis. Catalytic subunit of the NovJ(2)K(2) heterotetramer that catalyzes the NADPH-dependent reduction of the tyrosyl moiety of L-beta-OH-Tyr-S-NovH intermediate to yield the tethered beta-ketotyrosyl-S-NovH in the novobiocin biosynthesis pathway. Novobiocin is an aminocoumarin family antibiotic that targets bacterial DNA gyrases. In Streptomyces niveus (Streptomyces spheroides), this protein is Short-chain reductase protein NovJ (novJ).